The chain runs to 202 residues: MTRSHNHSATITTARFDQARAEAAVRELLIAVGEDPDREGLRDTPARVARAYQEIFAGLYTDPDEVLKTMFDEQHDEMVLVKDIPMYSTCEHHLVSFHGVAHVGYIPGVDGRVTGLSKLARVVDLYAKRPQVQERLTGQIADALMRRLDPRGVIVVIEAEHLCMAMRGIRKPGAVTTTSAVRGQFKTDKASRAEALDLILRK.

Cysteine 90, histidine 93, and cysteine 163 together coordinate Zn(2+).

The protein belongs to the GTP cyclohydrolase I family. As to quaternary structure, toroid-shaped homodecamer, composed of two pentamers of five dimers.

It catalyses the reaction GTP + H2O = 7,8-dihydroneopterin 3'-triphosphate + formate + H(+). The protein operates within cofactor biosynthesis; 7,8-dihydroneopterin triphosphate biosynthesis; 7,8-dihydroneopterin triphosphate from GTP: step 1/1. The protein is GTP cyclohydrolase 1 of Mycolicibacterium vanbaalenii (strain DSM 7251 / JCM 13017 / BCRC 16820 / KCTC 9966 / NRRL B-24157 / PYR-1) (Mycobacterium vanbaalenii).